The chain runs to 663 residues: UvrABC system protein B (663 aa).

The 388-residue stretch at 30-417 (DGIKAGKRHQ…TDKMVEQIIR (388 aa)) folds into the Helicase ATP-binding domain. Residue 43-50 (GATGTGKT) participates in ATP binding. The Beta-hairpin motif lies at 96–119 (YYDYYQPEAYVPSTDTFIEKDASI). The Helicase C-terminal domain maps to 434–600 (QIDDLLSEIQ…TINKKIHDLI (167 aa)). The UVR domain occupies 627–662 (QKTIDNIEKEMKQAAKDLDFEKATELRDMLFELKAE).

This sequence belongs to the UvrB family. Forms a heterotetramer with UvrA during the search for lesions. Interacts with UvrC in an incision complex.

The protein localises to the cytoplasm. In terms of biological role, the UvrABC repair system catalyzes the recognition and processing of DNA lesions. A damage recognition complex composed of 2 UvrA and 2 UvrB subunits scans DNA for abnormalities. Upon binding of the UvrA(2)B(2) complex to a putative damaged site, the DNA wraps around one UvrB monomer. DNA wrap is dependent on ATP binding by UvrB and probably causes local melting of the DNA helix, facilitating insertion of UvrB beta-hairpin between the DNA strands. Then UvrB probes one DNA strand for the presence of a lesion. If a lesion is found the UvrA subunits dissociate and the UvrB-DNA preincision complex is formed. This complex is subsequently bound by UvrC and the second UvrB is released. If no lesion is found, the DNA wraps around the other UvrB subunit that will check the other stand for damage. The sequence is that of UvrABC system protein B from Staphylococcus aureus (strain Mu50 / ATCC 700699).